A 188-amino-acid polypeptide reads, in one-letter code: dTTP/UTP pyrophosphatase (188 aa).

D67 acts as the Proton acceptor in catalysis.

The protein belongs to the Maf family. YhdE subfamily. A divalent metal cation is required as a cofactor.

The protein resides in the cytoplasm. It carries out the reaction dTTP + H2O = dTMP + diphosphate + H(+). It catalyses the reaction UTP + H2O = UMP + diphosphate + H(+). In terms of biological role, nucleoside triphosphate pyrophosphatase that hydrolyzes dTTP and UTP. May have a dual role in cell division arrest and in preventing the incorporation of modified nucleotides into cellular nucleic acids. The chain is dTTP/UTP pyrophosphatase from Roseobacter denitrificans (strain ATCC 33942 / OCh 114) (Erythrobacter sp. (strain OCh 114)).